The following is a 412-amino-acid chain: Mannose-1-phosphate guanylyltransferase regulatory subunit alpha (412 aa).

Residues 6 to 259 (TKAIILVGGP…VGFWRQIKNA (254 aa)) are substrate-binding domain. The GDP-alpha-D-mannose site is built by glutamate 88 and glutamine 255. A hexapeptide repeat domain region spans residues 281-412 (LKKGNNIIGN…DRNYNNEIIL (132 aa)).

It belongs to the transferase hexapeptide repeat family. As to quaternary structure, component of the GMPPA-GMPPB mannose-1-phosphate guanylyltransferase complex composed of 4 gmppA subunits and 8 gmppB subunits; the complex is organized into three layers, a central layer made up of 2 gmppA dimers sandwiched between two layers each made up of 2 gmppB dimers.

Functionally, regulatory subunit of the GMPPA-GMPPB mannose-1-phosphate guanylyltransferase complex; reduces the catalytic activity of GMPPB when part of the complex. Mediates allosteric feedback inhibition of GMPPB catalytic activity upon binding GDP-alpha-D-mannose. Together with GMPPB regulates GDP-alpha-D-mannose levels. This is Mannose-1-phosphate guanylyltransferase regulatory subunit alpha (gmppA) from Dictyostelium discoideum (Social amoeba).